Reading from the N-terminus, the 130-residue chain is Methylglyoxal synthase (130 aa).

Residues 1-130 (MSKPRIALIA…DLARNMQDVC (130 aa)) form the MGS-like domain. Substrate contacts are provided by residues His-11, Lys-15, 37–40 (TGTT), and 57–58 (SG). Asp-63 acts as the Proton donor/acceptor in catalysis. His-90 is a substrate binding site.

This sequence belongs to the methylglyoxal synthase family.

It carries out the reaction dihydroxyacetone phosphate = methylglyoxal + phosphate. Functionally, catalyzes the formation of methylglyoxal from dihydroxyacetone phosphate. This chain is Methylglyoxal synthase, found in Burkholderia vietnamiensis (strain G4 / LMG 22486) (Burkholderia cepacia (strain R1808)).